The primary structure comprises 71 residues: Cold shock-like protein CspB (71 aa).

Positions 7–67 constitute a CSD domain; sequence GLVKWFNADK…GAKGPAAANV (61 aa).

The protein resides in the cytoplasm. This chain is Cold shock-like protein CspB (cspB), found in Escherichia coli (strain K12).